Reading from the N-terminus, the 87-residue chain is uncharacterized protein (87 aa).

The chain crosses the membrane as a helical span at residues 63 to 83; that stretch reads IVLALVLGVFSLVGLIFIIYF.

The protein localises to the membrane. This is an uncharacterized protein from Dictyostelium discoideum (Social amoeba).